The sequence spans 149 residues: Cell division protein SepF (149 aa).

Belongs to the SepF family. Homodimer. Interacts with FtsZ.

It is found in the cytoplasm. Cell division protein that is part of the divisome complex and is recruited early to the Z-ring. Probably stimulates Z-ring formation, perhaps through the cross-linking of FtsZ protofilaments. Its function overlaps with FtsA. The chain is Cell division protein SepF from Clostridium perfringens (strain ATCC 13124 / DSM 756 / JCM 1290 / NCIMB 6125 / NCTC 8237 / Type A).